We begin with the raw amino-acid sequence, 705 residues long: Catalase C (705 aa).

The disordered stretch occupies residues methionine 1 to glutamine 31. Active-site residues include histidine 88 and asparagine 161. Position 375 (tyrosine 375) interacts with heme.

This sequence belongs to the catalase family. HPII subfamily. The cofactor is heme.

The catalysed reaction is 2 H2O2 = O2 + 2 H2O. In terms of biological role, decomposes hydrogen peroxide into water and oxygen; serves to protect cells from the toxic effects of hydrogen peroxide. Could protect cells in nodules which have a high potential to produce hydrogen peroxide because of the strong reducing conditions required for nitrogen fixation and the action of several proteins. The chain is Catalase C (katE) from Rhizobium meliloti (strain 1021) (Ensifer meliloti).